A 351-amino-acid chain; its full sequence is Histidinol-phosphate aminotransferase 1 (351 aa).

Lys-210 bears the N6-(pyridoxal phosphate)lysine mark.

Belongs to the class-II pyridoxal-phosphate-dependent aminotransferase family. Histidinol-phosphate aminotransferase subfamily. As to quaternary structure, homodimer. The cofactor is pyridoxal 5'-phosphate.

The catalysed reaction is L-histidinol phosphate + 2-oxoglutarate = 3-(imidazol-4-yl)-2-oxopropyl phosphate + L-glutamate. It functions in the pathway amino-acid biosynthesis; L-histidine biosynthesis; L-histidine from 5-phospho-alpha-D-ribose 1-diphosphate: step 7/9. In Pseudomonas aeruginosa (strain ATCC 15692 / DSM 22644 / CIP 104116 / JCM 14847 / LMG 12228 / 1C / PRS 101 / PAO1), this protein is Histidinol-phosphate aminotransferase 1 (hisC1).